The sequence spans 737 residues: Transcriptional repressor CTCF (737 aa).

Position 1 is an N-acetylmethionine (Met1). Lys18 is covalently cross-linked (Glycyl lysine isopeptide (Lys-Gly) (interchain with G-Cter in SUMO2)). A Glycyl lysine isopeptide (Lys-Gly) (interchain with G-Cter in SUMO) cross-link involves residue Lys74. The disordered stretch occupies residues 180–211; it reads QGELPPQEDPSWQKDPDYQPPAKKTKKTKKSK. Residues 202-211 are compositionally biased toward basic residues; that stretch reads KKTKKTKKSK. Residue Lys219 forms a Glycyl lysine isopeptide (Lys-Gly) (interchain with G-Cter in SUMO2) linkage. The segment at 266 to 288 adopts a C2H2-type 1 zinc-finger fold; sequence FQCELCSYTCPRRSNLDRHMKSH. Thr289 bears the Phosphothreonine mark. The segment at 294–316 adopts a C2H2-type 2 zinc-finger fold; the sequence is HKCHLCGRAFRTVTLLRNHLNTH. Phosphothreonine is present on Thr317. 2 C2H2-type zinc fingers span residues 322 to 345 and 351 to 373; these read HKCP…RYKH and FKCS…IRSH. Thr374 carries the post-translational modification Phosphothreonine. The C2H2-type 5 zinc finger occupies 379–401; sequence FQCSLCSYASRDTYKLKRHMRTH. Ser402 is modified (phosphoserine). C2H2-type zinc fingers lie at residues 407–430, 437–460, 467–489, 495–517, and 523–546; these read YECY…LQKH, FHCP…RKQH, KKCR…QKSH, FKCD…KRTH, and YACS…KRYH. The C2H2-type 11; atypical zinc finger occupies 555 to 577; it reads FVCSKCGKTFTRRNTMARHADNC. Disordered regions lie at residues 573–687 and 699–727; these read HADN…EDQN and KKEP…GDLT. A compositionally biased stretch (basic residues) spans 593 to 604; the sequence is KSKRGRKRKMRS. Residues Ser609, Ser610, and Ser612 each carry the phosphoserine modification. The span at 610–636 shows a compositional bias: acidic residues; that stretch reads SDSENAEPDLDDNEEEEEPAVEIEPEP. The span at 637–657 shows a compositional bias: pro residues; the sequence is EPQPQPQPQPQPQPVAPAPPP. A compositionally biased stretch (polar residues) spans 668 to 687; it reads RTNQPKQNQPTAIIQVEDQN. Lys699 participates in a covalent cross-link: Glycyl lysine isopeptide (Lys-Gly) (interchain with G-Cter in SUMO); alternate. Lys699 is covalently cross-linked (Glycyl lysine isopeptide (Lys-Gly) (interchain with G-Cter in SUMO2); alternate). Residues 704-714 show a composition bias toward acidic residues; that stretch reads AEPAEGEEEEA.

Belongs to the CTCF zinc-finger protein family. In terms of assembly, interacts with CHD8. Interacts with LLPH. Interacts with CENPE. Interacts with BRD2; promoting BRD2 recruitment to chromatin. Post-translationally, sumoylated on Lys-74 and Lys-699; sumoylation of CTCF contributes to the repressive function of CTCF on the MYC P2 promoter.

It is found in the nucleus. The protein resides in the nucleoplasm. It localises to the chromosome. Its subcellular location is the centromere. Its function is as follows. Chromatin binding factor that binds to DNA sequence specific sites and regulates the 3D structure of chromatin. Binds together strands of DNA, thus forming chromatin loops, and anchors DNA to cellular structures, such as the nuclear lamina. Defines the boundaries between active and heterochromatic DNA via binding to chromatin insulators, thereby preventing interaction between promoter and nearby enhancers and silencers. Plays a critical role in the epigenetic regulation. Participates in the allele-specific gene expression at the imprinted IGF2/H19 gene locus. On the maternal allele, binding within the H19 imprinting control region (ICR) mediates maternally inherited higher-order chromatin conformation to restrict enhancer access to IGF2. Mediates interchromosomal association between IGF2/H19 and WSB1/NF1 and may direct distant DNA segments to a common transcription factory. Regulates asynchronous replication of IGF2/H19. Plays a critical role in gene silencing over considerable distances in the genome. Preferentially interacts with unmethylated DNA, preventing spreading of CpG methylation and maintaining methylation-free zones. Inversely, binding to target sites is prevented by CpG methylation. Plays an important role in chromatin remodeling. Can dimerize when it is bound to different DNA sequences, mediating long-range chromatin looping. Causes local loss of histone acetylation and gain of histone methylation in the beta-globin locus, without affecting transcription. When bound to chromatin, it provides an anchor point for nucleosomes positioning. Seems to be essential for homologous X-chromosome pairing. May participate with Tsix in establishing a regulatable epigenetic switch for X chromosome inactivation. May play a role in preventing the propagation of stable methylation at the escape genes from X-inactivation. Involved in sister chromatid cohesion. Associates with both centromeres and chromosomal arms during metaphase and required for cohesin localization to CTCF sites. Plays a role in the recruitment of CENPE to the pericentromeric/centromeric regions of the chromosome during mitosis. Acts as a transcriptional repressor binding to promoters of vertebrate MYC gene and BAG1 gene. Also binds to the PLK and PIM1 promoters. Acts as a transcriptional activator of APP. Regulates APOA1/C3/A4/A5 gene cluster and controls MHC class II gene expression. Plays an essential role in oocyte and preimplantation embryo development by activating or repressing transcription. Seems to act as tumor suppressor. This Rattus norvegicus (Rat) protein is Transcriptional repressor CTCF (Ctcf).